The chain runs to 278 residues: MEKGLLLESVSYQYDANAAPVLKEIDIHVPLGEWVAVIGPNGSGKSTLAKLLNGLLLPTSGRVTFNGMSTMDEGTHWEIRQQVGLVFQNPEHQFVATTVRDDLAFGMENRGFPREKMIQRIEEVSIQVGIDHLLDEEPHRLSGGQKQRVAIAGILAVEPSVIVFDEATSMLDPQGRKDVLETMKQLHENGMTIISITHDVNEASQAGRVLLLEKGEVMLDGSPAVVFHEQDKLEAAGIDRPFAYQLQLALQSRGIQLEGALLKKEELVEALWKYKSSN.

Residues 5-239 (LLLESVSYQY…QDKLEAAGID (235 aa)) form the ABC transporter domain. Residue 39 to 46 (GPNGSGKS) coordinates ATP.

It belongs to the ABC transporter superfamily. Energy-coupling factor EcfA family. As to quaternary structure, forms a stable energy-coupling factor (ECF) transporter complex composed of 2 membrane-embedded substrate-binding proteins (S component), 2 ATP-binding proteins (A component) and 2 transmembrane proteins (T component).

It localises to the cell membrane. Functionally, ATP-binding (A) component of a common energy-coupling factor (ECF) ABC-transporter complex. Unlike classic ABC transporters this ECF transporter provides the energy necessary to transport a number of different substrates. The protein is Energy-coupling factor transporter ATP-binding protein EcfA1 of Halalkalibacterium halodurans (strain ATCC BAA-125 / DSM 18197 / FERM 7344 / JCM 9153 / C-125) (Bacillus halodurans).